Here is a 338-residue protein sequence, read N- to C-terminus: D-erythrose-4-phosphate dehydrogenase (338 aa).

11–12 (RI) serves as a coordination point for NAD(+). Substrate contacts are provided by residues 153 to 155 (SCT), arginine 199, 212 to 213 (TK), and arginine 235. Residue cysteine 154 is the Nucleophile of the active site. Position 317 (asparagine 317) interacts with NAD(+).

This sequence belongs to the glyceraldehyde-3-phosphate dehydrogenase family. Epd subfamily. In terms of assembly, homotetramer.

The protein localises to the cytoplasm. It catalyses the reaction D-erythrose 4-phosphate + NAD(+) + H2O = 4-phospho-D-erythronate + NADH + 2 H(+). It participates in cofactor biosynthesis; pyridoxine 5'-phosphate biosynthesis; pyridoxine 5'-phosphate from D-erythrose 4-phosphate: step 1/5. Its function is as follows. Catalyzes the NAD-dependent conversion of D-erythrose 4-phosphate to 4-phosphoerythronate. This chain is D-erythrose-4-phosphate dehydrogenase, found in Shewanella putrefaciens (strain CN-32 / ATCC BAA-453).